A 266-amino-acid chain; its full sequence is Vitamin B12-binding protein (266 aa).

An N-terminal signal peptide occupies residues 1–22; that stretch reads MVKQMFRALVALLLTLPVWLYA. Positions 25–266 constitute a Fe/B12 periplasmic-binding domain; sequence RVITLSPANT…QLCNALSQVN (242 aa). Residues Tyr-50 and 242-246 contribute to the cyanocob(III)alamin site; that span reads DWFER. A disulfide bridge links Cys-183 with Cys-259.

The protein belongs to the BtuF family. The complex is composed of two ATP-binding proteins (BtuD), two transmembrane proteins (BtuC) and a solute-binding protein (BtuF).

It localises to the periplasm. In terms of biological role, part of the ABC transporter complex BtuCDF involved in vitamin B12 import. Binds vitamin B12 and delivers it to the periplasmic surface of BtuC. This chain is Vitamin B12-binding protein, found in Salmonella choleraesuis (strain SC-B67).